The primary structure comprises 324 residues: Fructose-1,6-bisphosphatase class 1 (324 aa).

4 residues coordinate Mg(2+): Glu88, Asp107, Leu109, and Asp110. Substrate-binding positions include Asp110–Ser113, Asn199, and Lys265. Residue Glu271 coordinates Mg(2+).

The protein belongs to the FBPase class 1 family. In terms of assembly, homotetramer. The cofactor is Mg(2+).

It localises to the cytoplasm. The catalysed reaction is beta-D-fructose 1,6-bisphosphate + H2O = beta-D-fructose 6-phosphate + phosphate. The protein operates within carbohydrate biosynthesis; gluconeogenesis. The chain is Fructose-1,6-bisphosphatase class 1 from Neisseria meningitidis serogroup B (strain ATCC BAA-335 / MC58).